The chain runs to 216 residues: RNA pyrophosphohydrolase (216 aa).

One can recognise a Nudix hydrolase domain in the interval 6–149 (GFRPNVGIIL…KRDVYQLALT (144 aa)). The Nudix box motif lies at 38 to 59 (GGIKYGETPMQAMYRELHEETG). Residues 159–180 (AQRTDKSRGPRAPRYPRVSNGH) form a disordered region.

It belongs to the Nudix hydrolase family. RppH subfamily. A divalent metal cation serves as cofactor.

Its function is as follows. Accelerates the degradation of transcripts by removing pyrophosphate from the 5'-end of triphosphorylated RNA, leading to a more labile monophosphorylated state that can stimulate subsequent ribonuclease cleavage. The sequence is that of RNA pyrophosphohydrolase from Burkholderia thailandensis (strain ATCC 700388 / DSM 13276 / CCUG 48851 / CIP 106301 / E264).